A 491-amino-acid polypeptide reads, in one-letter code: Angiopoietin-related protein 1 (491 aa).

The signal sequence occupies residues 1-23 (MKAFIWTLSVLFFLLMGIGHGRG). Residues 80–168 (ITRMDLENLK…LNVTTEMLKM (89 aa)) adopt a coiled-coil conformation. N-linked (GlcNAc...) asparagine glycans are attached at residues N160 and N188. The region spanning 271–491 (FINEGPYKDC…AVQMLIKPID (221 aa)) is the Fibrinogen C-terminal domain. 2 disulfides stabilise this stretch: C280–C309 and C432–C445.

The protein resides in the secreted. The sequence is that of Angiopoietin-related protein 1 (ANGPTL1) from Bos taurus (Bovine).